A 305-amino-acid chain; its full sequence is Small ribosomal subunit protein uS3 (305 aa).

One can recognise a KH type-2 domain in the interval 17–86 (IDEFFSEELS…DPQVDVQEVD (70 aa)). Composition is skewed to acidic residues over residues 207–262 (EPEG…EAET) and 272–305 (AAEE…EEET). A disordered region spans residues 207 to 305 (EPEGDVEELL…EDETTDEEET (99 aa)).

It belongs to the universal ribosomal protein uS3 family. As to quaternary structure, part of the 30S ribosomal subunit.

Binds the lower part of the 30S subunit head. In Natronomonas pharaonis (strain ATCC 35678 / DSM 2160 / CIP 103997 / JCM 8858 / NBRC 14720 / NCIMB 2260 / Gabara) (Halobacterium pharaonis), this protein is Small ribosomal subunit protein uS3.